We begin with the raw amino-acid sequence, 568 residues long: Probable WRKY transcription factor 34 (568 aa).

Positions 172 to 236 (ACCAPADDGY…YTGDHIHSKP (65 aa)) form a DNA-binding region, WRKY 1. Zn(2+) is bound by residues Cys-203, Cys-208, His-231, and His-233. Disordered stretches follow at residues 230–252 (DHIHSKPPPNRRSGIGSSGTGQD) and 337–360 (KRRKLEAYATETSGSTRASREPRV). The WRKY 2 DNA-binding region spans 366–431 (SDIDILDDGY…YIGKHTHVVP (66 aa)). Residues Cys-397, Cys-402, His-426, and His-428 each coordinate Zn(2+).

This sequence belongs to the WRKY group I family.

It localises to the nucleus. Transcription factor. Interacts specifically with the W box (5'-(T)TGAC[CT]-3'), a frequently occurring elicitor-responsive cis-acting element. The sequence is that of Probable WRKY transcription factor 34 (WRKY34) from Arabidopsis thaliana (Mouse-ear cress).